The sequence spans 403 residues: MHGFHDVFIQILLLLAISVTVIAIAKLLKEPDSVALVLVGLVLGLTQLPFIEEAESYITQSEVFQATVISLFLPILLGDATLKLPFHHLFSQKKTVMGLAFLGTFISSLTIGAASYFLLDLPLAVAFTFAALMSATDPISVLSIFKSLGVKQKMSTIMEGESLFNDGIAVVLFKIASIYLLTYIEMGWAGLGSGVFMFLKFAVGGALVGLILGYVFSQVIRVYDDYPLEVAFSALLFFGSYFIAEHFHTSGVIAVVVGGFVFGDYGAKIGMSEETKTNLNTFWDSVTLLANALIFLMVGLEIRNIDLAGNWGYIVGAIAIVLVGRTIAVYIGTGWIKELSSKERILINWGGLRGSLSIALALSLPMDFDGREQVLLLTFSVVLFSLIVQGLTLKPVIKKLGLA.

12 consecutive transmembrane segments (helical) span residues 7–27, 34–54, 99–119, 125–145, 168–188, 196–216, 228–245, 250–272, 282–302, 311–331, 345–365, and 373–393; these read VFIQILLLLAISVTVIAIAKL, VALVLVGLVLGLTQLPFIEEA, LAFLGTFISSLTIGAASYFLL, VAFTFAALMSATDPISVLSIF, IAVVLFKIASIYLLTYIEMGW, FMFLKFAVGGALVGLILGYVF, LEVAFSALLFFGSYFIAE, SGVIAVVVGGFVFGDYGAKIGMS, FWDSVTLLANALIFLMVGLEI, WGYIVGAIAIVLVGRTIAVYI, ILINWGGLRGSLSIALALSLP, and QVLLLTFSVVLFSLIVQGLTL.

This sequence belongs to the monovalent cation:proton antiporter 1 (CPA1) transporter (TC 2.A.36) family.

The protein resides in the cell membrane. Na(+)/H(+) antiporter that extrudes sodium in exchange for external protons. Can also transport lithium. The chain is Na(+)/H(+) antiporter NhaH (nhaH) from Halobacillus aidingensis.